A 265-amino-acid polypeptide reads, in one-letter code: MLASEVIQAYEAFCPQEFSMEGDSRGLQIGTLDKGIQRVMVALDIREETVAEAIEKGVDLIIVKHAPIFRPIKDLLASRPQNQIYIDLIKHDIAVYVSHTNIDIVENGLNDWFCQMLGIEETTYLQETGPERGIGRIGNIQPQTFWELAQQVKQVFDLDSLRMVHYQEDDLQKPISRVAICGGSGQSFYKDALAKGADVYITGDIYYHTAQDMLSDGLLALDPGHYIEVIFVEKIAALLSQWKEDKGWSIDILPSQASTNPFHHI.

A divalent metal cation is bound by residues H65, D103, H225, and E228.

Belongs to the GTP cyclohydrolase I type 2/NIF3 family. In terms of assembly, homohexamer.

The chain is GTP cyclohydrolase 1 type 2 homolog from Streptococcus pneumoniae serotype 4 (strain ATCC BAA-334 / TIGR4).